Reading from the N-terminus, the 231-residue chain is Orotate phosphoribosyltransferase (231 aa).

Lysine 29 serves as a coordination point for 5-phospho-alpha-D-ribose 1-diphosphate. An orotate-binding site is contributed by 37-38; that stretch reads FF. Residues 75–76, arginine 107, lysine 108, lysine 111, histidine 113, and 133–141 each bind 5-phospho-alpha-D-ribose 1-diphosphate; these read YK and DDVISRCTA. Positions 137 and 165 each coordinate orotate.

Belongs to the purine/pyrimidine phosphoribosyltransferase family. PyrE subfamily. As to quaternary structure, homodimer.

It catalyses the reaction orotidine 5'-phosphate + diphosphate = orotate + 5-phospho-alpha-D-ribose 1-diphosphate. It functions in the pathway pyrimidine metabolism; UMP biosynthesis via de novo pathway; UMP from orotate: step 1/2. Functionally, catalyzes the transfer of a ribosyl phosphate group from 5-phosphoribose 1-diphosphate to orotate, leading to the formation of orotidine monophosphate (OMP). The polypeptide is Orotate phosphoribosyltransferase (URA5) (Podospora anserina (Pleurage anserina)).